The chain runs to 276 residues: Pantothenate synthetase (276 aa).

27–34 (MGALHRGH) is a binding site for ATP. Histidine 34 serves as the catalytic Proton donor. Residue glutamine 58 participates in (R)-pantoate binding. Beta-alanine is bound at residue glutamine 58. ATP is bound at residue 147–150 (GKKD). Glutamine 153 is a (R)-pantoate binding site. Residues alanine 176 and 184-187 (LSSR) contribute to the ATP site.

The protein belongs to the pantothenate synthetase family. Homodimer.

The protein localises to the cytoplasm. It catalyses the reaction (R)-pantoate + beta-alanine + ATP = (R)-pantothenate + AMP + diphosphate + H(+). It participates in cofactor biosynthesis; (R)-pantothenate biosynthesis; (R)-pantothenate from (R)-pantoate and beta-alanine: step 1/1. In terms of biological role, catalyzes the condensation of pantoate with beta-alanine in an ATP-dependent reaction via a pantoyl-adenylate intermediate. The polypeptide is Pantothenate synthetase (Helicobacter pylori (strain P12)).